We begin with the raw amino-acid sequence, 460 residues long: Bifunctional protein GlmU (460 aa).

The segment at Met-1 to Arg-230 is pyrophosphorylase. UDP-N-acetyl-alpha-D-glucosamine contacts are provided by residues Leu-9 to Gly-12, Lys-23, Gln-73, and Gly-78 to Thr-79. Asp-103 is a binding site for Mg(2+). Residues Gly-140, Glu-155, Asn-170, and Asn-228 each contribute to the UDP-N-acetyl-alpha-D-glucosamine site. Mg(2+) is bound at residue Asn-228. The tract at residues Val-231–Asn-251 is linker. Residues Gly-252–Lys-460 are N-acetyltransferase. UDP-N-acetyl-alpha-D-glucosamine contacts are provided by Arg-333 and Lys-351. Residue His-363 is the Proton acceptor of the active site. Residues Tyr-366 and Asn-377 each coordinate UDP-N-acetyl-alpha-D-glucosamine. Acetyl-CoA-binding positions include Ala-380, Asn-386–Tyr-387, Ser-405, Ala-423, and Arg-440.

In the N-terminal section; belongs to the N-acetylglucosamine-1-phosphate uridyltransferase family. It in the C-terminal section; belongs to the transferase hexapeptide repeat family. As to quaternary structure, homotrimer. It depends on Mg(2+) as a cofactor.

The protein resides in the cytoplasm. The enzyme catalyses alpha-D-glucosamine 1-phosphate + acetyl-CoA = N-acetyl-alpha-D-glucosamine 1-phosphate + CoA + H(+). The catalysed reaction is N-acetyl-alpha-D-glucosamine 1-phosphate + UTP + H(+) = UDP-N-acetyl-alpha-D-glucosamine + diphosphate. The protein operates within nucleotide-sugar biosynthesis; UDP-N-acetyl-alpha-D-glucosamine biosynthesis; N-acetyl-alpha-D-glucosamine 1-phosphate from alpha-D-glucosamine 6-phosphate (route II): step 2/2. It functions in the pathway nucleotide-sugar biosynthesis; UDP-N-acetyl-alpha-D-glucosamine biosynthesis; UDP-N-acetyl-alpha-D-glucosamine from N-acetyl-alpha-D-glucosamine 1-phosphate: step 1/1. It participates in bacterial outer membrane biogenesis; LPS lipid A biosynthesis. In terms of biological role, catalyzes the last two sequential reactions in the de novo biosynthetic pathway for UDP-N-acetylglucosamine (UDP-GlcNAc). The C-terminal domain catalyzes the transfer of acetyl group from acetyl coenzyme A to glucosamine-1-phosphate (GlcN-1-P) to produce N-acetylglucosamine-1-phosphate (GlcNAc-1-P), which is converted into UDP-GlcNAc by the transfer of uridine 5-monophosphate (from uridine 5-triphosphate), a reaction catalyzed by the N-terminal domain. This chain is Bifunctional protein GlmU, found in Streptococcus suis (strain 98HAH33).